A 124-amino-acid chain; its full sequence is Small ribosomal subunit protein uS12 (124 aa).

Residues 1 to 32 are disordered; that stretch reads MPTIQQLVRKGRQDKVSKNKTPALKGSPQRRG. Asp-89 carries the post-translational modification 3-methylthioaspartic acid.

It belongs to the universal ribosomal protein uS12 family. In terms of assembly, part of the 30S ribosomal subunit. Contacts proteins S8 and S17. May interact with IF1 in the 30S initiation complex.

Its function is as follows. With S4 and S5 plays an important role in translational accuracy. Functionally, interacts with and stabilizes bases of the 16S rRNA that are involved in tRNA selection in the A site and with the mRNA backbone. Located at the interface of the 30S and 50S subunits, it traverses the body of the 30S subunit contacting proteins on the other side and probably holding the rRNA structure together. The combined cluster of proteins S8, S12 and S17 appears to hold together the shoulder and platform of the 30S subunit. This Nocardioides sp. (strain ATCC BAA-499 / JS614) protein is Small ribosomal subunit protein uS12.